The following is a 345-amino-acid chain: Phosphoribosylformylglycinamidine cyclo-ligase (345 aa).

The protein belongs to the AIR synthase family.

It is found in the cytoplasm. The catalysed reaction is 2-formamido-N(1)-(5-O-phospho-beta-D-ribosyl)acetamidine + ATP = 5-amino-1-(5-phospho-beta-D-ribosyl)imidazole + ADP + phosphate + H(+). The protein operates within purine metabolism; IMP biosynthesis via de novo pathway; 5-amino-1-(5-phospho-D-ribosyl)imidazole from N(2)-formyl-N(1)-(5-phospho-D-ribosyl)glycinamide: step 2/2. In Synechococcus sp. (strain CC9605), this protein is Phosphoribosylformylglycinamidine cyclo-ligase.